A 415-amino-acid polypeptide reads, in one-letter code: Lipoyl synthase, mitochondrial (415 aa).

Residues 1 to 32 constitute a mitochondrion transit peptide; the sequence is MAVSTSHFRSLCASSRSLSRTGIVAPISCRGY. Residues 30–50 form a disordered region; that stretch reads RGYATTEPSPSATSTTTTTTA. The segment covering 33–49 has biased composition (low complexity); that stretch reads ATTEPSPSATSTTTTTT. [4Fe-4S] cluster is bound by residues C132, C137, C143, C163, C167, C170, and S378. One can recognise a Radical SAM core domain in the interval 146-367; that stretch reads GSDKSAATAT…RQRALDMGFL (222 aa).

The protein belongs to the radical SAM superfamily. Lipoyl synthase family. It depends on [4Fe-4S] cluster as a cofactor.

Its subcellular location is the mitochondrion. It catalyses the reaction [[Fe-S] cluster scaffold protein carrying a second [4Fe-4S](2+) cluster] + N(6)-octanoyl-L-lysyl-[protein] + 2 oxidized [2Fe-2S]-[ferredoxin] + 2 S-adenosyl-L-methionine + 4 H(+) = [[Fe-S] cluster scaffold protein] + N(6)-[(R)-dihydrolipoyl]-L-lysyl-[protein] + 4 Fe(3+) + 2 hydrogen sulfide + 2 5'-deoxyadenosine + 2 L-methionine + 2 reduced [2Fe-2S]-[ferredoxin]. It functions in the pathway protein modification; protein lipoylation via endogenous pathway; protein N(6)-(lipoyl)lysine from octanoyl-[acyl-carrier-protein]: step 2/2. In terms of biological role, catalyzes the radical-mediated insertion of two sulfur atoms into the C-6 and C-8 positions of the octanoyl moiety bound to the lipoyl domains of lipoate-dependent enzymes, thereby converting the octanoylated domains into lipoylated derivatives. In Neosartorya fischeri (strain ATCC 1020 / DSM 3700 / CBS 544.65 / FGSC A1164 / JCM 1740 / NRRL 181 / WB 181) (Aspergillus fischerianus), this protein is Lipoyl synthase, mitochondrial.